We begin with the raw amino-acid sequence, 158 residues long: Small ribosomal subunit protein uS7 (158 aa).

This sequence belongs to the universal ribosomal protein uS7 family. In terms of assembly, part of the 30S ribosomal subunit. Contacts proteins S9 and S11.

Functionally, one of the primary rRNA binding proteins, it binds directly to 16S rRNA where it nucleates assembly of the head domain of the 30S subunit. Is located at the subunit interface close to the decoding center, probably blocks exit of the E-site tRNA. This Gluconacetobacter diazotrophicus (strain ATCC 49037 / DSM 5601 / CCUG 37298 / CIP 103539 / LMG 7603 / PAl5) protein is Small ribosomal subunit protein uS7.